The primary structure comprises 947 residues: Bifunctional glutamine synthetase adenylyltransferase/adenylyl-removing enzyme (947 aa).

The tract at residues 1–440 (MTPLSSPLSQ…VFNELIGDDE (440 aa)) is adenylyl removase. The adenylyl transferase stretch occupies residues 450–947 (SEPWREVWQD…ASWRKWLVAV (498 aa)).

Belongs to the GlnE family. The cofactor is Mg(2+).

It carries out the reaction [glutamine synthetase]-O(4)-(5'-adenylyl)-L-tyrosine + phosphate = [glutamine synthetase]-L-tyrosine + ADP. The enzyme catalyses [glutamine synthetase]-L-tyrosine + ATP = [glutamine synthetase]-O(4)-(5'-adenylyl)-L-tyrosine + diphosphate. Involved in the regulation of glutamine synthetase GlnA, a key enzyme in the process to assimilate ammonia. When cellular nitrogen levels are high, the C-terminal adenylyl transferase (AT) inactivates GlnA by covalent transfer of an adenylyl group from ATP to specific tyrosine residue of GlnA, thus reducing its activity. Conversely, when nitrogen levels are low, the N-terminal adenylyl removase (AR) activates GlnA by removing the adenylyl group by phosphorolysis, increasing its activity. The regulatory region of GlnE binds the signal transduction protein PII (GlnB) which indicates the nitrogen status of the cell. In Salmonella schwarzengrund (strain CVM19633), this protein is Bifunctional glutamine synthetase adenylyltransferase/adenylyl-removing enzyme.